Consider the following 236-residue polypeptide: Purine nucleoside phosphorylase DeoD-type (236 aa).

Histidine 5 is a binding site for a purine D-ribonucleoside. Residues glycine 21, arginine 25, arginine 44, and 88-91 contribute to the phosphate site; that span reads RVGT. A purine D-ribonucleoside is bound by residues 180–182 and 204–205; these read EME and SD. Aspartate 205 serves as the catalytic Proton donor.

Belongs to the PNP/UDP phosphorylase family. As to quaternary structure, homohexamer; trimer of homodimers.

It carries out the reaction a purine D-ribonucleoside + phosphate = a purine nucleobase + alpha-D-ribose 1-phosphate. It catalyses the reaction a purine 2'-deoxy-D-ribonucleoside + phosphate = a purine nucleobase + 2-deoxy-alpha-D-ribose 1-phosphate. Functionally, catalyzes the reversible phosphorolytic breakdown of the N-glycosidic bond in the beta-(deoxy)ribonucleoside molecules, with the formation of the corresponding free purine bases and pentose-1-phosphate. This chain is Purine nucleoside phosphorylase DeoD-type, found in Shewanella denitrificans (strain OS217 / ATCC BAA-1090 / DSM 15013).